Here is a 484-residue protein sequence, read N- to C-terminus: MEEWVEKYRPKSLNDVAGHNKTKETLIEWIESFVSGQKQKPILLAGPPGSGKTTLAYAIAKDYAYDVIELNASDKRNKDVISQVVGTAATSKSITGRRTLIVLDEVDGLSGNDDRGGVAEIIKVLKTAENPVILTANDVYKPALMTLRNNVNLINVGSVHTNSIPPVLRKIALKEGFEIDEKVIKTIASHAGGDLRAAINDLQSLATGGSLEVEDAKELPDRDSEKSIFDAMRIIMKTTHYDIATSATRDVKEELGTIEEWISENLPKEYLKYKDLANGYDYLSKSDVFLGRVFRRQYFGLWRYASALMTAGTALAKEEKYRGFTRYAPPSIFTKLSRTKGTRQKMKDILKKIALKTHTSTKRARNTLDYMVVIFESNPEVSAELVEYYELTKEEMEFLTNKTITKNIFSVIAGKKPKVEKEIPKKKKTEEVMPIIPKRPKISELPKEPLKEVIETIEKSVENADTKEKEKKDPKKQATLDSFF.

46–53 is an ATP binding site; that stretch reads GPPGSGKT. Residues 463 to 478 show a composition bias toward basic and acidic residues; sequence NADTKEKEKKDPKKQA. The tract at residues 463 to 484 is disordered; sequence NADTKEKEKKDPKKQATLDSFF.

This sequence belongs to the activator 1 small subunits family. RfcL subfamily. As to quaternary structure, heteromultimer composed of small subunits (RfcS) and large subunits (RfcL).

In terms of biological role, part of the RFC clamp loader complex which loads the PCNA sliding clamp onto DNA. This Methanococcus maripaludis (strain C6 / ATCC BAA-1332) protein is Replication factor C large subunit.